A 106-amino-acid chain; its full sequence is Nucleoid-associated protein DP1429 (106 aa).

Belongs to the YbaB/EbfC family. As to quaternary structure, homodimer.

It is found in the cytoplasm. Its subcellular location is the nucleoid. Its function is as follows. Binds to DNA and alters its conformation. May be involved in regulation of gene expression, nucleoid organization and DNA protection. This chain is Nucleoid-associated protein DP1429, found in Desulfotalea psychrophila (strain LSv54 / DSM 12343).